A 317-amino-acid chain; its full sequence is Transaldolase (317 aa).

Lys-126 acts as the Schiff-base intermediate with substrate in catalysis.

This sequence belongs to the transaldolase family. Type 1 subfamily. Homodimer.

Its subcellular location is the cytoplasm. The enzyme catalyses D-sedoheptulose 7-phosphate + D-glyceraldehyde 3-phosphate = D-erythrose 4-phosphate + beta-D-fructose 6-phosphate. Its pathway is carbohydrate degradation; pentose phosphate pathway; D-glyceraldehyde 3-phosphate and beta-D-fructose 6-phosphate from D-ribose 5-phosphate and D-xylulose 5-phosphate (non-oxidative stage): step 2/3. Its function is as follows. Transaldolase is important for the balance of metabolites in the pentose-phosphate pathway. This is Transaldolase from Burkholderia ambifaria (strain ATCC BAA-244 / DSM 16087 / CCUG 44356 / LMG 19182 / AMMD) (Burkholderia cepacia (strain AMMD)).